We begin with the raw amino-acid sequence, 231 residues long: MVFLSLKYALSGLAATAAAVPHANRNTCDNSSLNTTATTYTTTSEDTIFTVARKFDRGPCDIARYNRMIDAEHIFANFTLRIPPQVCNPDSTTCFLTRQNATATCLKGGPHDYRTIAGDTIEKIALYKLNMTVESVYENAKMGVSSIHEELPVNTFLKIPQCVPSVCHVTPFHFTYGVYKDIAEMFDTTVGQIMAFNGGYNYSESASDADAAWITVPTGCTNLALNVTEEI.

The first 19 residues, Met1–Ala19, serve as a signal peptide directing secretion. Residues Asn30, Asn34, Asn77, Asn100, Asn130, Asn201, and Asn226 are each glycosylated (N-linked (GlcNAc...) asparagine). Residues Thr38–Ile82 form the LysM domain.

It belongs to the secreted LysM effector family.

It is found in the secreted. Functionally, secreted LysM effector that might have a role in sequestration of chitin oligosaccharides (breakdown products of fungal cell walls that are released during invasion and act as triggers of host immunity) to dampen host defense. In Penicillium expansum (Blue mold rot fungus), this protein is Secreted LysM effector LysM13.